The chain runs to 115 residues: uncharacterized protein (115 aa).

An N-terminal signal peptide occupies residues 1–29; it reads MKKAMAILAVLAAAAVICGLLFFHNDVTD.

This is an uncharacterized protein from Bacillus subtilis (strain 168).